The following is a 274-amino-acid chain: Beta-lysine N(6)-acetyltransferase (274 aa).

Positions 123-274 (FHLKIANETD…DMNFWYKLSE (152 aa)) constitute an N-acetyltransferase domain.

It belongs to the acetyltransferase family.

The catalysed reaction is (3S)-3,6-diaminohexanoate + acetyl-CoA = (3S)-6-acetamido-3-aminohexanoate + CoA + H(+). Catalyzes the acetylation of beta-lysine to N6-acetyl-beta-lysine, a compatible solute produced by methanogenic archaea that helps cells to cope with salt stress. This is Beta-lysine N(6)-acetyltransferase from Methanococcus maripaludis (strain DSM 14266 / JCM 13030 / NBRC 101832 / S2 / LL).